The following is a 227-amino-acid chain: Phosphatidylserine decarboxylase proenzyme (227 aa).

Catalysis depends on Ser184, which acts as the Schiff-base intermediate with substrate; via pyruvic acid. Pyruvic acid (Ser); by autocatalysis is present on Ser184.

This sequence belongs to the phosphatidylserine decarboxylase family. PSD-A subfamily. In terms of assembly, heterodimer of a large membrane-associated beta subunit and a small pyruvoyl-containing alpha subunit. It depends on pyruvate as a cofactor. In terms of processing, is synthesized initially as an inactive proenzyme. Formation of the active enzyme involves a self-maturation process in which the active site pyruvoyl group is generated from an internal serine residue via an autocatalytic post-translational modification. Two non-identical subunits are generated from the proenzyme in this reaction, and the pyruvate is formed at the N-terminus of the alpha chain, which is derived from the carboxyl end of the proenzyme. The post-translation cleavage follows an unusual pathway, termed non-hydrolytic serinolysis, in which the side chain hydroxyl group of the serine supplies its oxygen atom to form the C-terminus of the beta chain, while the remainder of the serine residue undergoes an oxidative deamination to produce ammonia and the pyruvoyl prosthetic group on the alpha chain.

The protein localises to the cell membrane. The catalysed reaction is a 1,2-diacyl-sn-glycero-3-phospho-L-serine + H(+) = a 1,2-diacyl-sn-glycero-3-phosphoethanolamine + CO2. It participates in phospholipid metabolism; phosphatidylethanolamine biosynthesis; phosphatidylethanolamine from CDP-diacylglycerol: step 2/2. In terms of biological role, catalyzes the formation of phosphatidylethanolamine (PtdEtn) from phosphatidylserine (PtdSer). The sequence is that of Phosphatidylserine decarboxylase proenzyme from Ehrlichia ruminantium (strain Gardel).